The chain runs to 139 residues: Large ribosomal subunit protein uL24 (139 aa).

The tract at residues 1–25 (MKRNTNVSSSRRKSRKAHFTASSGE) is disordered.

The protein belongs to the universal ribosomal protein uL24 family.

The sequence is that of Large ribosomal subunit protein uL24 (rpl26) from Dictyostelium discoideum (Social amoeba).